The following is a 563-amino-acid chain: Src substrate protein p85 (563 aa).

6 Cortactin repeats span residues 89-125 (ASHG…SQVD), 126-162 (SVKG…SQKD), 163-199 (YSSG…SQKD), 200-236 (YSKG…SQKD), 237-273 (YVKG…SQKD), and 274-310 (YKSG…SQQD). Residues 311–333 (YSKGFGGKYGVQKDRMDKNAATF) form a Cortactin 7; truncated repeat. Positions 331-477 (ATFEDIEKPT…EAVSQREAEY (147 aa)) are disordered. Positions 349 to 410 (VERVANKTSS…EEQAKAKKQT (62 aa)) form a coiled coil. Residues 366–405 (LAKEKEQEDRRKAEAERAQRMAREKQEQEEARRKLEEQAK) show a composition bias toward basic and acidic residues. In terms of domain architecture, SH3 spans 505–563 (ELGITAIALYDYQAAGDDEISFDPDDIITNIEMIDDGWWRGVCKGRYGLFPANYVELRQ).

Acetylated. Post-translationally, in normal cells, appears to be phosphorylated on serine and threonine; in cells expressing activated forms of pp60-src, they become heavily phosphorylated on tyrosine in vitro. Tyrosine phosphorylation in transformed cells may contribute to cellular growth regulation and transformation.

It localises to the cytoplasm. It is found in the cytoskeleton. The protein localises to the cell projection. Its subcellular location is the lamellipodium. The protein resides in the ruffle. It localises to the dendrite. It is found in the cell membrane. The protein localises to the podosome. Its subcellular location is the cell junction. The protein resides in the focal adhesion. It localises to the membrane. It is found in the clathrin-coated pit. The protein localises to the dendritic spine. Its subcellular location is the cell cortex. The protein resides in the endoplasmic reticulum. Functionally, contributes to the organization of the actin cytoskeleton and cell shape. Plays a role in the formation of lamellipodia and in cell migration. Plays a role in the regulation of neuron morphology, axon growth and formation of neuronal growth cones, and may play a role in the regulation of neuronal spine density. Plays a role in focal adhesion assembly and turnover. Plays a role in intracellular protein transport and endocytosis, and in modulating the levels of potassium channels present at the cell membrane. Plays a role in endocytosis via clathrin-coated pits. The protein is Src substrate protein p85 (CTTN1) of Gallus gallus (Chicken).